The sequence spans 539 residues: Phenylalanine--tRNA ligase beta subunit (539 aa).

The region spanning 271 to 347 is the B5 domain; sequence LSPARWTVTT…KSYGYENLKA (77 aa). Aspartate 325, aspartate 331, glutamate 334, and aspartate 335 together coordinate Mg(2+).

The protein belongs to the phenylalanyl-tRNA synthetase beta subunit family. Type 2 subfamily. As to quaternary structure, tetramer of two alpha and two beta subunits. Mg(2+) is required as a cofactor.

The protein resides in the cytoplasm. It catalyses the reaction tRNA(Phe) + L-phenylalanine + ATP = L-phenylalanyl-tRNA(Phe) + AMP + diphosphate + H(+). In Methanothrix thermoacetophila (strain DSM 6194 / JCM 14653 / NBRC 101360 / PT) (Methanosaeta thermophila), this protein is Phenylalanine--tRNA ligase beta subunit.